The primary structure comprises 176 residues: Ferritin, middle subunit (176 aa).

A Ferritin-like diiron domain is found at Gln-7–Gly-156. Positions 24, 59, 62, 104, 138, and 141 each coordinate Fe cation.

The protein belongs to the ferritin family. As to quaternary structure, oligomer of 24 subunits. The functional molecule is roughly spherical and contains a central cavity into which the polymeric mineral iron core is deposited.

The enzyme catalyses 4 Fe(2+) + O2 + 4 H(+) = 4 Fe(3+) + 2 H2O. Stores iron in a soluble, non-toxic, readily available form. Important for iron homeostasis. Has ferroxidase activity. Iron is taken up in the ferrous form and deposited as ferric hydroxides after oxidation. The polypeptide is Ferritin, middle subunit (Aquarana catesbeiana (American bullfrog)).